The following is a 160-amino-acid chain: MNAVDLIVEDDAWSSLAGKTRLVEEAISAACKELPDRTPGVVAILLGGDEGVASMNAQFRGKAGATNVLSFPAGEHADNHLGDIALAHGVIQREAEDRDIALADHLRHLIIHGFLHLQGFDHQQDDEAEVMEAIERRALARLGVADPYPNEDPGPGPHSE.

The Zn(2+) site is built by histidine 112, histidine 116, and histidine 122.

The protein belongs to the endoribonuclease YbeY family. Requires Zn(2+) as cofactor.

The protein localises to the cytoplasm. In terms of biological role, single strand-specific metallo-endoribonuclease involved in late-stage 70S ribosome quality control and in maturation of the 3' terminus of the 16S rRNA. This Maricaulis maris (strain MCS10) (Caulobacter maris) protein is Endoribonuclease YbeY.